The sequence spans 145 residues: Protoporphyrinogen IX oxidase (145 aa).

The next 4 helical transmembrane spans lie at 6–26 (LWFK…LLYL), 61–81 (AMIS…FVAL), 83–103 (TWFQ…GLLA), and 123–143 (IVNE…IVKP). Position 12 (histidine 12) interacts with heme. Lysine 88 provides a ligand contact to heme.

The protein belongs to the HemJ family. As to quaternary structure, homodimer. The cofactor is heme b.

It localises to the cell membrane. It carries out the reaction protoporphyrinogen IX + 3 A = protoporphyrin IX + 3 AH2. Its pathway is porphyrin-containing compound metabolism; protoporphyrin-IX biosynthesis; protoporphyrin-IX from protoporphyrinogen-IX: step 1/1. Functionally, catalyzes the oxidation of protoporphyrinogen IX to protoporphyrin IX. Is involved in the biosynthesis of tetrapyrrole molecules like heme. Does not use oxygen or artificial electron acceptors such as menadione or benzoquinone. The sequence is that of Protoporphyrinogen IX oxidase from Rickettsia prowazekii (strain Madrid E).